We begin with the raw amino-acid sequence, 312 residues long: Photosystem I assembly protein Ycf4 (312 aa).

The next 3 helical transmembrane spans lie at 42-62, 91-111, and 113-133; these read WAFIVCLGSIGFLLTGISSYF, IILFFPQGLVMCFYGILGLFL, and FYLWFSIFLNIGAGFNEIYIY.

It belongs to the Ycf4 family.

The protein localises to the plastid. It localises to the chloroplast thylakoid membrane. Seems to be required for the assembly of the photosystem I complex. The chain is Photosystem I assembly protein Ycf4 from Pleurastrum terricola (Filamentous green alga).